The primary structure comprises 287 residues: PPP2R1A-PPP2R2A-interacting phosphatase regulator 1 (287 aa).

Residues 1-44 (MAQEKMELDLELPPGTGGSPAEGGGSGGGGGLRRSNSAPLIHGL) form a disordered region. Positions 15–32 (GTGGSPAEGGGSGGGGGL) are enriched in gly residues. Ser35 bears the Phosphoserine mark. Ser37 bears the Phosphoserine; by CHEK1 mark. The residue at position 45 (Ser45) is a Phosphoserine. Position 47 is a phosphothreonine (Thr47). Phosphoserine occurs at positions 48, 62, and 76. Lys89 participates in a covalent cross-link: Glycyl lysine isopeptide (Lys-Gly) (interchain with G-Cter in SUMO1). Phosphoserine occurs at positions 143 and 147. The residue at position 149 (Thr149) is a Phosphothreonine. Disordered stretches follow at residues 167–189 (SNGL…RSQS) and 236–287 (GVCV…LSSK). 2 stretches are compositionally biased toward low complexity: residues 178 to 189 (PTTRFTTRRSQS) and 246 to 257 (GNSSSAGSSCNS). Residues Ser187 and Ser189 each carry the phosphoserine modification. Residues 259-270 (AKVSTTTDSPVS) show a composition bias toward polar residues. Ser267, Ser270, and Ser276 each carry phosphoserine.

This sequence belongs to the FAM122 family. As to quaternary structure, interacts with PPP2CA and PPP2R1A. Interacts (via its N-terminus) with PPP2R2A; the interaction is direct and this interaction inhibits PP2A activity. The CHEK1-mediated Ser-37 phosphorylated form interacts with 14-3-3 proteins. In terms of processing, CHEK1-mediated phosphorylation at Ser-37 negatively regulates its ability to inhibit serine/threonine-protein phosphatase 2A (PP2A) activity. Phosphorylation leads to its release from the PP2A complex and its sequestration by 14-3-3 proteins in the cytoplasm resulting in its inability to translocate to the nucleus, where it otherwise inhibits PP2A.

The protein resides in the nucleus. It localises to the cytoplasm. Its function is as follows. Acts as an inhibitor of serine/threonine-protein phosphatase 2A (PP2A) activity. Inhibits PP2A activity by blocking the substrate binding site on PPP2R2A and the active site of PPP2CA. Potentiates ubiquitin-mediated proteasomal degradation of serine/threonine-protein phosphatase 2A catalytic subunit alpha (PPP2CA). Inhibits PP2A-mediated dephosphorylation of WEE1, promoting ubiquitin-mediated proteolysis of WEE1, thereby releasing G2/M checkpoint. The protein is PPP2R1A-PPP2R2A-interacting phosphatase regulator 1 of Homo sapiens (Human).